Here is a 55-residue protein sequence, read N- to C-terminus: Variant surface glycoprotein ETAT 1.2 (55 aa).

An N-linked (GlcNAc...) asparagine glycan is attached at Asn-34. A lipid anchor (GPI-anchor amidated asparagine) is attached at Asn-38. The propeptide at 39–55 is removed in mature form; that stretch reads NSFAIKTSTLLLAVLLF.

It localises to the cell membrane. In terms of biological role, VSG forms a coat on the surface of the parasite. The trypanosome evades the immune response of the host by expressing a series of antigenically distinct VSGs from an estimated 1000 VSG genes. The protein is Variant surface glycoprotein ETAT 1.2 of Trypanosoma brucei rhodesiense.